The following is a 73-amino-acid chain: Small ribosomal subunit protein eS27 (73 aa).

Residues C28, C31, C47, and C50 each contribute to the Zn(2+) site. The segment at 28 to 50 (CPKCGNRQVVFSHSTFRARCLNC) adopts a C4-type zinc-finger fold.

The protein belongs to the eukaryotic ribosomal protein eS27 family. Part of the 30S ribosomal subunit. Zn(2+) serves as cofactor.

This Aeropyrum pernix (strain ATCC 700893 / DSM 11879 / JCM 9820 / NBRC 100138 / K1) protein is Small ribosomal subunit protein eS27.